Reading from the N-terminus, the 134-residue chain is Large ribosomal subunit protein eL32 (134 aa).

Belongs to the eukaryotic ribosomal protein eL32 family.

The chain is Large ribosomal subunit protein eL32 (RpL32) from Spodoptera frugiperda (Fall armyworm).